A 115-amino-acid polypeptide reads, in one-letter code: MLKRCNFKNQVKYFQSDFEQLIRQHPEKIIILDFYATWCGPCKAIAPLYKELATTHKGIIFCKVDVDEAEDLCSKYDVKMMPTFIFTKNGDAIEALEGCVEDELRQKVLEHVSAQ.

The region spanning 2-114 (LKRCNFKNQV…RQKVLEHVSA (113 aa)) is the Thioredoxin domain. Catalysis depends on nucleophile residues C39 and C42. A disulfide bridge connects residues C39 and C42.

The protein belongs to the thioredoxin family. In terms of tissue distribution, expressed in ASJ and ASI ciliated sensory neurons. Expressed in the intestine (at protein level).

In terms of biological role, participates in various redox reactions through the reversible oxidation of its active center dithiol to a disulfide and catalyzes dithiol-disulfide exchange reactions. Shown to facilitate the reduction of insulin disulfide bonds. Might play a role in the reversible nitrosylation of cysteine residues in target proteins, and thereby contributing to the response to intracellular nitric oxide. Shapes the ASJ sensory neuron biphasic response to nitric oxide (NO) exposure; trans-nitrosylation activity might inhibit calcium flux to the cytoplasm in ASJ neurons when exposed to a NO stimulus, whereas de-nitrosylation activity might promote calcium flux when NO is diminished. By regulating the NO-induced ASJ sensory neuron activity, mediates the avoidance response to NO-producing organisms like P.aeruginosa. Positively regulates life span extension under normal and caloric restriction conditions, dauer formation and the oxidative stress response. Contributes to the down-regulation of expression of the insulin-like neuropeptide daf-28 in the ASJ neurons in a redox-independent fashion, thereby promoting dauer formation. Negatively regulates the nuclear localization of the intestinal skn-1 transcription factor in a p38 MAPK pathway-dependent and redox-independent fashion. This Caenorhabditis elegans protein is Thioredoxin-1 (trx-1).